A 117-amino-acid chain; its full sequence is Large ribosomal subunit protein uL18 (117 aa).

It belongs to the universal ribosomal protein uL18 family. In terms of assembly, part of the 50S ribosomal subunit; part of the 5S rRNA/L5/L18/L25 subcomplex. Contacts the 5S and 23S rRNAs.

Functionally, this is one of the proteins that bind and probably mediate the attachment of the 5S RNA into the large ribosomal subunit, where it forms part of the central protuberance. In Aliivibrio fischeri (strain MJ11) (Vibrio fischeri), this protein is Large ribosomal subunit protein uL18.